Reading from the N-terminus, the 602-residue chain is MSSMRTHYCGLVTEQFSGQEVALTGWVQRRRDHGGVIFIDLRDREGLVQVVCDPDRPEMFKAAEEIRNEFCIRVTGKVRPRPAGTENANLTSGKIEVLCHELTVLNPSVTPPFQLDDDNLSETTRLTHRVLDLRRPQMQYNLRLRYKVAMEVRKFLDAQGFIDIETPMLGKSTPEGARDYLVPSRVNPGHFFALPQSPQIFKQMLMVSGFDRYYQITKCFRDEDLRADRQPEFTQIDCETSFLTEQEIRDLFEDMMRTVFKNAIDVDLDAKFPVMEFREAMARFGSDKPDLRVKLEFTELTEVMKDVDFKVFSGPANSDNGRVVGLRVPGGGAISRGEIDAYTQFVGIYGAKGLAWIKVNEVAKGRDGLQSPIVKNLHDAAIAEILKRTGAQDGDIIFFGADKAKVVNDSIGALRLKIGHSDFGKANGLFEDAWKPLWVVDFPMFEYDEEDARWVAMHHPFTSPKDEHLEYLETDPGKCLAKAYDMVLNGWEMGGGSVRIFRSDIQSKVFRALKINDEEARAKFGYLLDALQYGAPPHGGLAFGLDRIVTMMAGADSIRDVIAFPKTQRAQDLLTQAPSSVDEKQLRELHIRLRTAEPKPNA.

E175 contacts L-aspartate. The interval 199–202 is aspartate; it reads QIFK. R221 provides a ligand contact to L-aspartate. Residues 221 to 223 and Q230 each bind ATP; that span reads RDE. An L-aspartate-binding site is contributed by H458. E492 serves as a coordination point for ATP. R499 lines the L-aspartate pocket. 544–547 contributes to the ATP binding site; that stretch reads GLDR.

It belongs to the class-II aminoacyl-tRNA synthetase family. Type 1 subfamily. As to quaternary structure, homodimer.

The protein localises to the cytoplasm. The catalysed reaction is tRNA(Asx) + L-aspartate + ATP = L-aspartyl-tRNA(Asx) + AMP + diphosphate. Functionally, aspartyl-tRNA synthetase with relaxed tRNA specificity since it is able to aspartylate not only its cognate tRNA(Asp) but also tRNA(Asn). Reaction proceeds in two steps: L-aspartate is first activated by ATP to form Asp-AMP and then transferred to the acceptor end of tRNA(Asp/Asn). The sequence is that of Aspartate--tRNA(Asp/Asn) ligase from Cupriavidus taiwanensis (strain DSM 17343 / BCRC 17206 / CCUG 44338 / CIP 107171 / LMG 19424 / R1) (Ralstonia taiwanensis (strain LMG 19424)).